We begin with the raw amino-acid sequence, 665 residues long: MELTREKVLLLTFLRMQYSHILPDSIENRVISTEAPEWELDKSLQDLLIHDYDYSKTSFSSSPPIVANDTVSNVRKPSDTKQVNGAGGQVNHSRAEDSDYATSDLSESSDVGDDDNSCIFSFSKVPMQKDVASIKEEERLDPKISTLNNIDAIANLKLTNMVESSQAVNLTSSKQSSINQQSSVSTDYDDLRSISEESFHLSQGEIPLTFPMNSSLTDTEADAVVAVDALFPGKQRGTHNTVNKARSVSNAKAPTSALRALLEHKENSSQNGPLAENFATFSGHAESNALRLNIYFPSSESPSKPLFVELRKNVLVSEAIGYILLQYVNQQLVPPIEDEAQNPNYWNLRIVEDDGELDEDFPALDRVGPLSKFGFDAFALVKATPAQIKENQAAYPFKSKHPTSIPEANNKTHIRHTSSTSSQSQKQAQDVKDTLNTSHVVQVRLPPYGDNARFCNIEISKTTRLAMVLNQVCWMKQLERFKYTLRVAGSDTVLPLDKTFSSLDGNPTLELVKKKVRDKKGSTQQLPTSSPQNSVYGSIKKDAQSSTYNATDIMSSNTYQEFLVWKRQPVSFMGRHERLLAIDGEYVHIMPSESKNIFETPKTSSIHAGSIILCKQSKKSPCNFKMIVSKNRETKRYDFEVLSALEAAIIVSRIRALMNTVKKIN.

Ser-62 is subject to Phosphoserine. 2 stretches are compositionally biased toward polar residues: residues 65-83 (IVAN…TKQV) and 100-109 (YATSDLSESS). Residues 65–112 (IVANDTVSNVRKPSDTKQVNGAGGQVNHSRAEDSDYATSDLSESSDVG) are disordered. Residue Ser-133 is modified to Phosphoserine. Positions 255-392 (TSALRALLEH…ATPAQIKENQ (138 aa)) constitute a CRIM domain. Residues 395–433 (YPFKSKHPTSIPEANNKTHIRHTSSTSSQSQKQAQDVKD) are disordered. 4 positions are modified to phosphoserine: Ser-404, Ser-490, Ser-502, and Ser-530. A disordered region spans residues 517–537 (RDKKGSTQQLPTSSPQNSVYG). Positions 522-536 (STQQLPTSSPQNSVY) are enriched in polar residues. Positions 558-659 (TYQEFLVWKR…IVSRIRALMN (102 aa)) constitute an SIN1-type PH domain.

It belongs to the SIN1 family. The target of rapamycin complex 2 (TORC2) is composed of at least bit61, pop3/wat1, sin1, ste20 and tor1. Interacts with the sty1 MAP kinase. Phosphorylated; under environmental stress. Either Ser-61 or Ser-62 and Ser-298, Ser-299 or Ser-301 are phosphorylated as well.

In terms of biological role, component of the mechanistic target of rapamycin complex 2 (mTORC2), which regulates multiple cellular processes to control cell growth in response to environmental signals. In response to signals, TORC2 phosphorylates AGC protein kinase family members, such as gad8. TORC2 is required for cell survival under various stress conditions. TORC2 positively controls G1 cell-cycle arrest, sexual development and amino acid uptake. Positively regulates amino acid uptake through the control of expression of amino acid permeases. Within the mTORC2 complex, sin1 acts as a substrate adapter which recognizes and binds AGC protein kinase family members for phosphorylation by tor1. In Schizosaccharomyces pombe (strain 972 / ATCC 24843) (Fission yeast), this protein is Target of rapamycin complex 2 subunit sin1.